The sequence spans 225 residues: 2-C-methyl-D-erythritol 4-phosphate cytidylyltransferase (225 aa).

This sequence belongs to the IspD/TarI cytidylyltransferase family. IspD subfamily.

It catalyses the reaction 2-C-methyl-D-erythritol 4-phosphate + CTP + H(+) = 4-CDP-2-C-methyl-D-erythritol + diphosphate. Its pathway is isoprenoid biosynthesis; isopentenyl diphosphate biosynthesis via DXP pathway; isopentenyl diphosphate from 1-deoxy-D-xylulose 5-phosphate: step 2/6. In terms of biological role, catalyzes the formation of 4-diphosphocytidyl-2-C-methyl-D-erythritol from CTP and 2-C-methyl-D-erythritol 4-phosphate (MEP). The polypeptide is 2-C-methyl-D-erythritol 4-phosphate cytidylyltransferase (Prochlorococcus marinus (strain NATL2A)).